Consider the following 982-residue polypeptide: Pentatricopeptide repeat-containing protein At5g62370 (982 aa).

24 PPR repeats span residues 94–129 (DSSCYGALIRKLTEMGQPGVAETFYNQRVIGNGIVP), 130–164 (DSSVLDSMVFCLVKLRRFDEARAHLDRIIASGYAP), 165–199 (SRNSSSLVVDELCNQDRFLEAFHCFEQVKERGSGL), 200–234 (WLWCCKRLFKGLCGHGHLNEAIGMLDTLCGMTRMP), 236–270 (PVNLYKSLFYCFCKRGCAAEAEALFDHMEVDGYYV), 271–305 (DKVMYTCLMKEYCKDNNMTMAMRLYLRMVERSFEL), 306–340 (DPCIFNTLIHGFMKLGMLDKGRVMFSQMIKKGVQS), 341–376 (NVFTYHIMIGSYCKEGNVDYALRLFVNNTGSEDISR), 377–411 (NVHCYTNLIFGFYKKGGMDKAVDLLMRMLDNGIVP), 412–446 (DHITYFVLLKMLPKCHELKYAMVILQSILDNGCGI), 476–510 (AAVGLAVVTTALCSQRNYIAALSRIEKMVNLGCTP), 511–545 (LPFSYNSVIKCLFQENIIEDLASLVNIIQELDFVP), 546–580 (DVDTYLIVVNELCKKNDRDAAFAIIDAMEELGLRP), 581–615 (TVAIYSSIIGSLGKQGRVVEAEETFAKMLESGIQP), 616–650 (DEIAYMIMINTYARNGRIDEANELVEEVVKHFLRP), 651–685 (SSFTYTVLISGFVKMGMMEKGCQYLDKMLEDGLSP), 686–720 (NVVLYTALIGHFLKKGDFKFSFTLFGLMGENDIKH), 721–755 (DHIAYITLLSGLWRAMARKKKRQVIVEPGKEKLLQ), 759–789 (RTKPLVSIPSSLGNYGSKSFAMEVIGKVKKS), 793–827 (NLYLHNTIITGYCAAGRLDEAYNHLESMQKEGIVP), 828–858 (NLVTYTILMKSHIEAGDIESAIDLFEGTNCE), 860–894 (DQVMYSTLLKGLCDFKRPLDALALMLEMQKSGINP), 895–929 (NKDSYEKLLQCLCYSRLTMEAVKVVKDMAALDIWP), and 930–964 (RSINHTWLIYILCEEKKLREARALFAIMVQSGRSL).

Belongs to the PPR family. P subfamily.

The sequence is that of Pentatricopeptide repeat-containing protein At5g62370 from Arabidopsis thaliana (Mouse-ear cress).